Reading from the N-terminus, the 70-residue chain is Turripeptide Gsp9.3 (70 aa).

A signal peptide spans 1-20 (MKVYCLLLVLLVGLVSQAHG). One can recognise a Kazal-like domain in the interval 21-70 (QLDKKCQMVCTFDYRPVCGSDGRTYPNKCTLTSTACMSQRSITVFHDGEC). Cystine bridges form between Cys-26/Cys-56, Cys-30/Cys-49, and Cys-38/Cys-70.

It belongs to the conopeptide P-like superfamily. In terms of tissue distribution, expressed by the venom duct.

Its subcellular location is the secreted. Functionally, acts as a neurotoxin by inhibiting an ion channel. May also act as a serine protease inhibitor, since it possess the kazal serine protease inhibitor signature. This is Turripeptide Gsp9.3 from Gemmula speciosa (Splendid gem-turris).